We begin with the raw amino-acid sequence, 182 residues long: ATP-dependent protease subunit HslV (182 aa).

Thr10 is an active-site residue. Na(+) contacts are provided by Ala166, Cys169, and Ser172.

This sequence belongs to the peptidase T1B family. HslV subfamily. A double ring-shaped homohexamer of HslV is capped on each side by a ring-shaped HslU homohexamer. The assembly of the HslU/HslV complex is dependent on binding of ATP.

It is found in the cytoplasm. It carries out the reaction ATP-dependent cleavage of peptide bonds with broad specificity.. Its activity is regulated as follows. Allosterically activated by HslU binding. In terms of biological role, protease subunit of a proteasome-like degradation complex believed to be a general protein degrading machinery. In Rickettsia peacockii (strain Rustic), this protein is ATP-dependent protease subunit HslV.